The primary structure comprises 236 residues: F-box and leucine-rich protein 22 (236 aa).

The F-box domain occupies 1 to 46 (MHITQLNRECLLCLFSFLDKDSRRSLSRTCSQLRDVFEDPTLWPLL). LRR repeat units follow at residues 15–40 (FSFL…FEDP), 43–72 (WPLL…SICW), 98–123 (HESL…TLSG), 124–149 (CGHV…RLEN), 150–175 (CARV…HVDF), and 176–201 (CRNV…AERS).

In terms of assembly, directly interacts with SKP1 and CUL1. Enriched in cardiac muscle (at protein level).

The protein resides in the cytoplasm. It localises to the myofibril. The protein localises to the sarcomere. Its subcellular location is the z line. The protein operates within protein modification; protein ubiquitination. Functionally, substrate-recognition component of the SCF (SKP1-CUL1-F-box protein)-type E3 ubiquitin ligase complex. Promotes ubiquitination of sarcomeric proteins alpha-actinin-2 (ACTN2) and filamin-C (FLNC). This Mus musculus (Mouse) protein is F-box and leucine-rich protein 22 (Fbxl22).